The following is a 194-amino-acid chain: Ion-translocating oxidoreductase complex subunit A (194 aa).

The next 6 membrane-spanning stretches (helical) occupy residues 4 to 24 (LALI…QFLG), 39 to 59 (IGLS…SHIL), 72 to 92 (LRTI…EMLV), 102 to 122 (VLGI…VALL), 135 to 155 (TTQG…FAAL), and 172 to 192 (AIGM…SGLV).

This sequence belongs to the NqrDE/RnfAE family. In terms of assembly, the complex is composed of six subunits: RnfA, RnfB, RnfC, RnfD, RnfE and RnfG.

The protein localises to the cell inner membrane. Functionally, part of a membrane-bound complex that couples electron transfer with translocation of ions across the membrane. The chain is Ion-translocating oxidoreductase complex subunit A from Pseudomonas aeruginosa (strain LESB58).